Consider the following 432-residue polypeptide: MQLLTIGINHHTAPVALRERVAFPLEQIKPALVTFKNVFLGPQAPNTPEAAILSTCNRTELYCATDDRAAREGAVRWLSEYHRIPVDELAPHVYALPQSEAVRHAFRVASGLDSMVLGETQILGQMKDAVRTATEAGALGTYLNQLFQRTFAVAKEVRGTTEIGTQSVSMAAAAVRLAQRIFEKVSDQRVLLIGAGEMIELCATHFAAQGPRELVVANRTAERGQRLAERFNGRAMPLADLPTRMHEFDIIVSCTASTLPIIGLGAVERAVKARRHRPIFMVDLAVPRDIEPEVGKLKDVFLYTVDDLGAIVREGNASRQAAVAQAEAIIETRVQNFMQWLDTRSVVPVIRHMHTQADALRRAEVEKAQKLLARGDDPAAVLEALSQALTNKLIHGPTSALNRVNGADRDSLIDLMRGFYQHAPRSNDQSGH.

Substrate-binding positions include 55–58 (TCNR), S114, 119–121 (ETQ), and Q125. The Nucleophile role is filled by C56. An NADP(+)-binding site is contributed by 194 to 199 (GAGEMI).

It belongs to the glutamyl-tRNA reductase family. Homodimer.

It carries out the reaction (S)-4-amino-5-oxopentanoate + tRNA(Glu) + NADP(+) = L-glutamyl-tRNA(Glu) + NADPH + H(+). The protein operates within porphyrin-containing compound metabolism; protoporphyrin-IX biosynthesis; 5-aminolevulinate from L-glutamyl-tRNA(Glu): step 1/2. Its function is as follows. Catalyzes the NADPH-dependent reduction of glutamyl-tRNA(Glu) to glutamate 1-semialdehyde (GSA). The sequence is that of Glutamyl-tRNA reductase from Burkholderia orbicola (strain AU 1054).